The following is a 572-amino-acid chain: Polyprotein P2A (572 aa).

The next 3 helical transmembrane spans lie at 7 to 27 (LSYV…NAFI), 37 to 57 (IPIV…TSVV), and 77 to 94 (TIYV…YGVV). In terms of domain architecture, Peptidase S39 spans 135–330 (ILGSTYSVVE…VSKMETLPPE (196 aa)). Catalysis depends on for protease activity residues H181, D216, and S284. The tract at residues 498 to 572 (QESLFPPKPR…SPASPPPTRT (75 aa)) is disordered. Residues 508-520 (ATSSKPITTSSPG) show a composition bias toward polar residues. The span at 544 to 555 (LSRKQRRRRSTK) shows a compositional bias: basic residues.

The polyprotein is proteolytically cleaved into several chains by the viral protease.

It localises to the host membrane. Responsible for cleavages of polyprotein P2A and replicase polyprotein P2AB. Its function is as follows. Covalently attached to the 5' extremity of the genomic and subgenomic RNAs. It may serve as a primer for the replicase. The polypeptide is Polyprotein P2A (Southern cowpea mosaic virus (SCPMV)).